The primary structure comprises 511 residues: Phosphoenolpyruvate carboxylase (511 aa).

It belongs to the PEPCase type 2 family. Homotetramer. The cofactor is Mg(2+).

It catalyses the reaction oxaloacetate + phosphate = phosphoenolpyruvate + hydrogencarbonate. Its function is as follows. Catalyzes the irreversible beta-carboxylation of phosphoenolpyruvate (PEP) to form oxaloacetate (OAA), a four-carbon dicarboxylic acid source for the tricarboxylic acid cycle. In Saccharolobus islandicus (strain Y.N.15.51 / Yellowstone #2) (Sulfolobus islandicus), this protein is Phosphoenolpyruvate carboxylase.